An 869-amino-acid chain; its full sequence is DNA mismatch repair protein MutS (869 aa).

Residue 602 to 609 (GPNMSGKS) coordinates ATP.

It belongs to the DNA mismatch repair MutS family.

Its function is as follows. This protein is involved in the repair of mismatches in DNA. It is possible that it carries out the mismatch recognition step. This protein has a weak ATPase activity. The sequence is that of DNA mismatch repair protein MutS from Staphylococcus carnosus (strain TM300).